Here is a 425-residue protein sequence, read N- to C-terminus: Serine--tRNA ligase (425 aa).

T232–E234 serves as a coordination point for L-serine. Residues R263–E265 and V279 each bind ATP. E286 lines the L-serine pocket. E350–S353 serves as a coordination point for ATP. T387 lines the L-serine pocket.

The protein belongs to the class-II aminoacyl-tRNA synthetase family. Type-1 seryl-tRNA synthetase subfamily. In terms of assembly, homodimer. The tRNA molecule binds across the dimer.

The protein localises to the cytoplasm. It catalyses the reaction tRNA(Ser) + L-serine + ATP = L-seryl-tRNA(Ser) + AMP + diphosphate + H(+). The enzyme catalyses tRNA(Sec) + L-serine + ATP = L-seryl-tRNA(Sec) + AMP + diphosphate + H(+). Its pathway is aminoacyl-tRNA biosynthesis; selenocysteinyl-tRNA(Sec) biosynthesis; L-seryl-tRNA(Sec) from L-serine and tRNA(Sec): step 1/1. Its function is as follows. Catalyzes the attachment of serine to tRNA(Ser). Is also able to aminoacylate tRNA(Sec) with serine, to form the misacylated tRNA L-seryl-tRNA(Sec), which will be further converted into selenocysteinyl-tRNA(Sec). The polypeptide is Serine--tRNA ligase (Methanospirillum hungatei JF-1 (strain ATCC 27890 / DSM 864 / NBRC 100397 / JF-1)).